A 209-amino-acid polypeptide reads, in one-letter code: COP9 signalosome complex subunit 8 (209 aa).

A PCI domain is found at 8-179; it reads ESAFSFKKLL…GALDVSFNKF (172 aa). Residue S175 is modified to Phosphoserine.

Belongs to the CSN8 family. As to quaternary structure, component of the CSN complex, composed of COPS1/GPS1, COPS2, COPS3, COPS4, COPS5, COPS6, COPS7 (COPS7A or COPS7B), COPS8 and COPS9 isoform 1. In the complex, it probably interacts directly with COPS3, COPS4 and COPS7 (COPS7A or COPS7B).

It localises to the cytoplasm. Its subcellular location is the nucleus. Component of the COP9 signalosome complex (CSN), a complex involved in various cellular and developmental processes. The CSN complex is an essential regulator of the ubiquitin (Ubl) conjugation pathway by mediating the deneddylation of the cullin subunits of SCF-type E3 ligase complexes, leading to decrease the Ubl ligase activity of SCF-type complexes such as SCF, CSA or DDB2. The complex is also involved in phosphorylation of p53/TP53, c-jun/JUN, IkappaBalpha/NFKBIA, ITPK1 and IRF8/ICSBP, possibly via its association with CK2 and PKD kinases. CSN-dependent phosphorylation of TP53 and JUN promotes and protects degradation by the Ubl system, respectively. This is COP9 signalosome complex subunit 8 (COPS8) from Homo sapiens (Human).